Consider the following 286-residue polypeptide: Probable tRNA(His) guanylyltransferase (286 aa).

Residues Asp29, Gly30, and Asp76 each contribute to the Mg(2+) site. Residues 29–34 and 75–76 contribute to the GTP site; these read DGKKFH and SD.

The protein belongs to the tRNA(His) guanylyltransferase family. The cofactor is Mg(2+).

It carries out the reaction a 5'-end ribonucleotide-tRNA(His) + GTP + ATP + H2O = a 5'-end phospho-guanosine-ribonucleotide-tRNA(His) + AMP + 2 diphosphate + H(+). Its function is as follows. Adds a GMP to the 5'-end of tRNA(His) after transcription and RNase P cleavage. In Drosophila melanogaster (Fruit fly), this protein is Probable tRNA(His) guanylyltransferase.